Here is a 214-residue protein sequence, read N- to C-terminus: ATP-dependent Clp protease proteolytic subunit (214 aa).

Serine 114 functions as the Nucleophile in the catalytic mechanism. Histidine 139 is an active-site residue.

Belongs to the peptidase S14 family. In terms of assembly, fourteen ClpP subunits assemble into 2 heptameric rings which stack back to back to give a disk-like structure with a central cavity, resembling the structure of eukaryotic proteasomes.

It localises to the cytoplasm. It catalyses the reaction Hydrolysis of proteins to small peptides in the presence of ATP and magnesium. alpha-casein is the usual test substrate. In the absence of ATP, only oligopeptides shorter than five residues are hydrolyzed (such as succinyl-Leu-Tyr-|-NHMec, and Leu-Tyr-Leu-|-Tyr-Trp, in which cleavage of the -Tyr-|-Leu- and -Tyr-|-Trp bonds also occurs).. Cleaves peptides in various proteins in a process that requires ATP hydrolysis. Has a chymotrypsin-like activity. Plays a major role in the degradation of misfolded proteins. The chain is ATP-dependent Clp protease proteolytic subunit from Nitrosomonas europaea (strain ATCC 19718 / CIP 103999 / KCTC 2705 / NBRC 14298).